The chain runs to 340 residues: Replication factor C subunit 5 (340 aa).

At Met1 the chain carries N-acetylmethionine. ATP is bound at residue 60–67 (GPPGTGKT).

It belongs to the activator 1 small subunits family. As to quaternary structure, subunit of the RFC complex, an heteropentameric complex consisting of a large subunit RFC1 and four small subunits RFC2, RFC3, RFC4 and RFC5; the RFC complex interacts with PCNA. Forms an heterotetrameric complex with RFC2, RFC3 and RFC4; this complex has ATPase activity but is not stimulated by PCNA. The heterotetramer of subunits RFC2, RFC3, RFC4 and RFC5 interacts with RAD17.

The protein resides in the nucleus. In terms of biological role, subunit of the replication factor C (RFC) complex which acts during elongation of primed DNA templates by DNA polymerases delta and epsilon, and is necessary for ATP-dependent loading of proliferating cell nuclear antigen (PCNA) onto primed DNA. In Homo sapiens (Human), this protein is Replication factor C subunit 5 (RFC5).